The following is a 63-amino-acid chain: Large ribosomal subunit protein bL28 (63 aa).

This sequence belongs to the bacterial ribosomal protein bL28 family.

The chain is Large ribosomal subunit protein bL28 from Mycoplasmopsis synoviae (strain 53) (Mycoplasma synoviae).